A 391-amino-acid chain; its full sequence is Leucine-rich repeat-containing protein 74B (391 aa).

The disordered stretch occupies residues 1 to 38 (MKGPCEVQKNEDQEGEAAATGPQAETLEAERSWTADSH). The segment covering 28 to 38 (EAERSWTADSH) has biased composition (basic and acidic residues). LRR repeat units lie at residues 106 to 126 (YIKR…EALA), 134 to 154 (IISD…QAIC), 162 to 182 (TVEK…QHLA), 190 to 211 (GLKS…ILGP), 218 to 239 (GLTE…AFAR), 246 to 259 (FLKV…GFGD), 274 to 294 (VLEE…LKLG), 302 to 323 (TLRI…GLLK), and 332 to 354 (ALEL…ASSM). Positions 371–391 (KDWPQASTPSQPASAPSDSGL) are disordered. Residues 374-391 (PQASTPSQPASAPSDSGL) are compositionally biased toward low complexity.

This is Leucine-rich repeat-containing protein 74B from Mus musculus (Mouse).